The primary structure comprises 307 residues: UDP-N-acetylenolpyruvoylglucosamine reductase (307 aa).

One can recognise an FAD-binding PCMH-type domain in the interval 21 to 183 (RVGGPADLFF…TEVVMEGPPG (163 aa)). Residue Arg163 is part of the active site. Basic and acidic residues predominate over residues 200-209 (EATQPTKDRT). A disordered region spans residues 200-227 (EATQPTKDRTAGSTFRNPAGFSSTGRAD). Polar residues predominate over residues 210 to 224 (AGSTFRNPAGFSSTG). Ser212 serves as the catalytic Proton donor. Glu294 is a catalytic residue.

This sequence belongs to the MurB family. FAD is required as a cofactor.

It is found in the cytoplasm. The enzyme catalyses UDP-N-acetyl-alpha-D-muramate + NADP(+) = UDP-N-acetyl-3-O-(1-carboxyvinyl)-alpha-D-glucosamine + NADPH + H(+). It functions in the pathway cell wall biogenesis; peptidoglycan biosynthesis. Cell wall formation. The polypeptide is UDP-N-acetylenolpyruvoylglucosamine reductase (Dinoroseobacter shibae (strain DSM 16493 / NCIMB 14021 / DFL 12)).